The following is a 205-amino-acid chain: Protein N-terminal glutamine amidohydrolase (205 aa).

Active-site residues include Cys20, His74, and Asp90.

Belongs to the NTAQ1 family. As to quaternary structure, monomer.

It carries out the reaction N-terminal L-glutaminyl-[protein] + H2O = N-terminal L-glutamyl-[protein] + NH4(+). Functionally, mediates the side-chain deamidation of N-terminal glutamine residues to glutamate, an important step in N-end rule pathway of protein degradation. Conversion of the resulting N-terminal glutamine to glutamate renders the protein susceptible to arginylation, polyubiquitination and degradation as specified by the N-end rule. Does not act on substrates with internal or C-terminal glutamine and does not act on non-glutamine residues in any position. This is Protein N-terminal glutamine amidohydrolase (tun) from Drosophila virilis (Fruit fly).